Consider the following 308-residue polypeptide: Probable GTP 3',8-cyclase (308 aa).

The Radical SAM core domain occupies 4–222; it reads RFGRPLEDLR…KKLIRKKHFR (219 aa). Arg13 is a binding site for GTP. 3 residues coordinate [4Fe-4S] cluster: Cys20, Cys24, and Cys27. A GTP-binding site is contributed by Lys60. Gly64 lines the S-adenosyl-L-methionine pocket. Thr90 is a GTP binding site. Ser114 is an S-adenosyl-L-methionine binding site. Residue Lys151 coordinates GTP. Positions 245 and 248 each coordinate [4Fe-4S] cluster. Residue 250-252 participates in GTP binding; sequence RIR. Cys262 lines the [4Fe-4S] cluster pocket.

Belongs to the radical SAM superfamily. MoaA family. The cofactor is [4Fe-4S] cluster.

It carries out the reaction GTP + AH2 + S-adenosyl-L-methionine = (8S)-3',8-cyclo-7,8-dihydroguanosine 5'-triphosphate + 5'-deoxyadenosine + L-methionine + A + H(+). It participates in cofactor biosynthesis; molybdopterin biosynthesis. Functionally, catalyzes the cyclization of GTP to (8S)-3',8-cyclo-7,8-dihydroguanosine 5'-triphosphate. The sequence is that of Probable GTP 3',8-cyclase from Saccharolobus solfataricus (strain ATCC 35092 / DSM 1617 / JCM 11322 / P2) (Sulfolobus solfataricus).